Consider the following 245-residue polypeptide: 8-amino-3,8-dideoxy-manno-octulosonate cytidylyltransferase (245 aa).

Belongs to the KdsB family.

The protein resides in the cytoplasm. It catalyses the reaction 8-amino-3,8-dideoxy-alpha-D-manno-octulosonate + CTP = CMP-8-amino-3,8-dideoxy-alpha-D-manno-oct-2-ulosonate + diphosphate. It participates in bacterial outer membrane biogenesis; lipopolysaccharide biosynthesis. Its function is as follows. Activates KDO8N (a required 8-carbon sugar) for incorporation into bacterial lipopolysaccharide in the Shewanella genus. This chain is 8-amino-3,8-dideoxy-manno-octulosonate cytidylyltransferase, found in Shewanella woodyi (strain ATCC 51908 / MS32).